A 244-amino-acid polypeptide reads, in one-letter code: Serine acetyltransferase (244 aa).

This sequence belongs to the transferase hexapeptide repeat family.

It localises to the cytoplasm. It carries out the reaction L-serine + acetyl-CoA = O-acetyl-L-serine + CoA. Its pathway is amino-acid biosynthesis; L-cysteine biosynthesis; L-cysteine from L-serine: step 1/2. The chain is Serine acetyltransferase (cysE) from Synechococcus elongatus (strain ATCC 33912 / PCC 7942 / FACHB-805) (Anacystis nidulans R2).